The following is a 37-amino-acid chain: Hemextin B (37 aa).

Heterotetramer composed of 2 hemextin A and 2 hemextin B chains; non-covalently linked. Does not exist as a complex in the crude venom. Post-translationally, may contain several disulfide bonds. As to expression, expressed by the venom gland.

It localises to the secreted. Functionally, hemextin B (monomer): does not show anticoagulant activity. Seems only to synergitically enhance hemextin A activity. In terms of biological role, hemextin AB complex: specifically inhibits the activation of FX (F10) by the TF-FVIIa complex (extrinsic tenase complex (ETC)) (IC(50)= 100 nM, Ki=50 nM) by non-competitively inhibiting the enzymatic activity of FVIIa. The sequence is that of Hemextin B from Hemachatus haemachatus (Rinkhals).